We begin with the raw amino-acid sequence, 635 residues long: Surface protein F (635 aa).

An N-terminal signal peptide occupies residues 1–37 (MAKYRGKPFQLYVKLSCSTMMATSIILTNILPYDAQA). Composition is skewed to basic and acidic residues over residues 101–112 (NELDSKDNKSSH) and 193–202 (KSKDASKDTS). Disordered stretches follow at residues 101-122 (NELD…SDID) and 192-228 (HKSK…SGHV). Positions 597-601 (LPKAG) match the LPXTG sorting signal motif. Ala600 is modified (pentaglycyl murein peptidoglycan amidated alanine). Residues 601–635 (GETIKEHWLPISVIVGAMGVLMIWLSRRNKLKNKA) constitute a propeptide, removed by sortase.

It is found in the secreted. The protein localises to the cell wall. In Staphylococcus aureus (strain NCTC 8325 / PS 47), this protein is Surface protein F.